Consider the following 376-residue polypeptide: ORC1-type DNA replication protein 2 (376 aa).

Residues 73-77 (TGKTS), Tyr209, and Arg221 contribute to the ATP site.

This sequence belongs to the CDC6/cdc18 family.

Functionally, involved in regulation of DNA replication. The polypeptide is ORC1-type DNA replication protein 2 (cdc6-2) (Archaeoglobus fulgidus (strain ATCC 49558 / DSM 4304 / JCM 9628 / NBRC 100126 / VC-16)).